Reading from the N-terminus, the 1022-residue chain is Probable E3 ubiquitin-protein ligase HERC6 (1022 aa).

RCC1 repeat units follow at residues N41–H92, K93–K145, S147–L198, G200–Q253, and D254–H304. Residues E693–P1017 form the HECT domain. The active-site Glycyl thioester intermediate is C985.

In terms of tissue distribution, detected in brain, heart, placenta and testis.

It localises to the cytoplasm. The protein localises to the cytosol. It carries out the reaction S-ubiquitinyl-[E2 ubiquitin-conjugating enzyme]-L-cysteine + [acceptor protein]-L-lysine = [E2 ubiquitin-conjugating enzyme]-L-cysteine + N(6)-ubiquitinyl-[acceptor protein]-L-lysine.. Its pathway is protein modification; protein ubiquitination. Functionally, E3 ubiquitin-protein ligase which accepts ubiquitin from an E2 ubiquitin-conjugating enzyme in the form of a thioester and then directly transfers the ubiquitin to targeted substrates. The polypeptide is Probable E3 ubiquitin-protein ligase HERC6 (HERC6) (Homo sapiens (Human)).